Here is a 710-residue protein sequence, read N- to C-terminus: Early transcription factor 82 kDa subunit (710 aa).

The protein belongs to the poxviridae VETF large subunit family. Heterodimer of a 70 kDa and a 82 kDa subunit. Part of the early transcription complex composed of ETF, RAP94/OPG109, and the DNA-directed RNA polymerase.

The protein resides in the virion. Functionally, acts with RNA polymerase to initiate transcription from early gene promoters. Is recruited by the RPO-associated protein of 94 kDa RAP94/OPG109 to form the early transcription complex, which also contains the core RNA polymerase. ETF heterodimer binds to early gene promoters. The protein is Early transcription factor 82 kDa subunit (OPG133) of Homo sapiens (Human).